The primary structure comprises 730 residues: Synaptogenesis protein syg-1 (730 aa).

A signal peptide spans 1–18; that stretch reads MVRWQTWPLLLLFQLVTC. At 19–551 the chain is on the extracellular side; it reads QQLQQRIVEA…WIVITAKFDR (533 aa). Ig-like domains are found at residues 23 to 123, 131 to 265, 270 to 352, 357 to 433, and 441 to 540; these read QRIV…AKLT, PKIV…VKLS, PQIN…IKLN, ARIM…QILS, and PPTV…RNIL. 5 cysteine pairs are disulfide-bonded: cysteine 44–cysteine 104, cysteine 152–cysteine 246, cysteine 292–cysteine 336, cysteine 378–cysteine 420, and cysteine 462–cysteine 519. Asparagine 93 and asparagine 206 each carry an N-linked (GlcNAc...) asparagine glycan. Residues 552-572 form a helical membrane-spanning segment; that stretch reads MVALAIISAGVLLVSLLCCLC. The Cytoplasmic segment spans residues 573 to 730; the sequence is MCRSNCRSRK…RPISRTSTHV (158 aa).

It belongs to the immunoglobulin superfamily. In terms of assembly, interacts with skr-1. Interacts with syg-2. Interacts with the WAVE regulatory complex; the interaction leads to formation of a synaptic F-actin network that is required for synapse formation and axon branching. In terms of tissue distribution, expression in head motor neurons, occasionally in HSN neurons and weakly in other cells in the vulval region. Expressed in the primary synapse region of HSNL motor neuron.

It localises to the cell membrane. The protein resides in the cell projection. The protein localises to the axon. It is found in the synapse. In terms of biological role, cell adhesion protein. Involved in synapse formation in the HSNL egg-laying motor neuron. Inhibits assembly of the SCF(sel-10) E3 ubiquitin ligase complex at synapses, and protects them from elimination. Also required for F-actin assembly at the synaptic region and for axon branch formation. The sequence is that of Synaptogenesis protein syg-1 from Caenorhabditis elegans.